Consider the following 379-residue polypeptide: Cytochrome b (379 aa).

The next 4 membrane-spanning stretches (helical) occupy residues 33 to 53 (FGSLLGMCLMIQILTGLFLAM), 77 to 98 (WLIRYLHANGASMFFICLFIHV), 113 to 133 (WNIGIILFLMTMATAFVGYVL), and 178 to 198 (FFAFHFILPFIIAAFALVHLL). The heme b site is built by His83 and His97. Heme b is bound by residues His182 and His196. His201 is an a ubiquinone binding site. 4 consecutive transmembrane segments (helical) span residues 226–246 (TKDLLGIFLLLLVLMILALFF), 288–308 (LGGVLALVLSILILAAFPLLN), 320–340 (VTQVIYWIFIANLLVLTWIGG), and 347–367 (FTMIGQIASITYFAIITILMP).

This sequence belongs to the cytochrome b family. In terms of assembly, the cytochrome bc1 complex contains 11 subunits: 3 respiratory subunits (MT-CYB, CYC1 and UQCRFS1), 2 core proteins (UQCRC1 and UQCRC2) and 6 low-molecular weight proteins (UQCRH/QCR6, UQCRB/QCR7, UQCRQ/QCR8, UQCR10/QCR9, UQCR11/QCR10 and a cleavage product of UQCRFS1). This cytochrome bc1 complex then forms a dimer. Requires heme b as cofactor.

Its subcellular location is the mitochondrion inner membrane. Functionally, component of the ubiquinol-cytochrome c reductase complex (complex III or cytochrome b-c1 complex) that is part of the mitochondrial respiratory chain. The b-c1 complex mediates electron transfer from ubiquinol to cytochrome c. Contributes to the generation of a proton gradient across the mitochondrial membrane that is then used for ATP synthesis. This is Cytochrome b (MT-CYB) from Akodon fumeus (Smoky grass mouse).